A 373-amino-acid polypeptide reads, in one-letter code: Dimethylallyltryptophan synthase CymD (373 aa).

Residues aspartate 55, valine 56, and glutamate 64 each contribute to the L-tryptophan site. Glutamate 64 acts as the Nucleophile in catalysis. Dimethylallyl diphosphate contacts are provided by glutamine 77, lysine 146, tryptophan 148, arginine 205, and lysine 207. Position 211 (arginine 211) interacts with L-tryptophan. Dimethylallyl diphosphate is bound at residue tyrosine 274. Residue tyrosine 326 coordinates L-tryptophan. Arginine 337, lysine 339, and tyrosine 341 together coordinate dimethylallyl diphosphate. The FtsK domain maps to methionine 346–glutamate 373.

Its function is as follows. Dimethylallyltryptophan synthase; part of the gene cluster that mediates the biosynthesis of cyclic heptapeptides, known as cyclomarins and also of cyclic dipeptides, called cyclomarazines, which have both antimicrobial and cytotoxic effects. Catalyzes the reverse N-prenylation of monomeric L-tryptophan with dimethylallyl diphosphate (DMAPP) to form N-(1,1-dimethylallyl)-tryptophan (r-N-DMAT). The formation of r-N-DMAT appears to proceed via the deprotonation of the indole nitrogen of tryptophan, which facilitates a nucleophilic attack on the carbocation that is forming on the dimethylallyl group as the diphosphate dissociates. The N-(1,1-dimethylallyl)-tryptophan produced by CymD is combined with a range of standard and nonproteinogenic amino acid substrates to synthesize the peptides, a process that is probably catalyzed by the non-canonical nonribosomal peptide synthetase (NRPS), CymA. Other proteins in the cluster catalyze further modifications of the peptides including CymV which catalyzes the oxidation of olefinic cyclomarins and cyclomarazines to their respective epoxide derivatives. Utilizes only DMAPP as the prenyl donor and has no requirement for divalent cations. The polypeptide is Dimethylallyltryptophan synthase CymD (Salinispora arenicola (strain CNS-205)).